Here is a 233-residue protein sequence, read N- to C-terminus: MKKLTKKQNLFKTFLNHTKKYDIDEGITLLKKMATSKFIESLDVAINLGINPKNTNQNIRNTTILPHGIGRLIKVAVFTQGENEKIAKKFGAEFVGLHNLIETVKTKTILFDVAIATPDVMPYVSQLGPILGPRGLMPNPKLGTITEKLEYAIKNAKSGQIHYKNDKNGIIHISIGKINFENTKIKENLNALISSLKQSKPSQSKGTYIKQVVISTTMSSGIKIDLNTLNNAS.

The protein belongs to the universal ribosomal protein uL1 family. In terms of assembly, part of the 50S ribosomal subunit.

Binds directly to 23S rRNA. The L1 stalk is quite mobile in the ribosome, and is involved in E site tRNA release. In terms of biological role, protein L1 is also a translational repressor protein, it controls the translation of the L11 operon by binding to its mRNA. The polypeptide is Large ribosomal subunit protein uL1 (Buchnera aphidicola subsp. Baizongia pistaciae (strain Bp)).